The chain runs to 150 residues: D-aminoacyl-tRNA deacylase (150 aa).

Positions 138–139 (GP) match the Gly-cisPro motif, important for rejection of L-amino acids motif.

Belongs to the DTD family. As to quaternary structure, homodimer.

Its subcellular location is the cytoplasm. It carries out the reaction glycyl-tRNA(Ala) + H2O = tRNA(Ala) + glycine + H(+). The enzyme catalyses a D-aminoacyl-tRNA + H2O = a tRNA + a D-alpha-amino acid + H(+). Its function is as follows. An aminoacyl-tRNA editing enzyme that deacylates mischarged D-aminoacyl-tRNAs. Also deacylates mischarged glycyl-tRNA(Ala), protecting cells against glycine mischarging by AlaRS. Acts via tRNA-based rather than protein-based catalysis; rejects L-amino acids rather than detecting D-amino acids in the active site. By recycling D-aminoacyl-tRNA to D-amino acids and free tRNA molecules, this enzyme counteracts the toxicity associated with the formation of D-aminoacyl-tRNA entities in vivo and helps enforce protein L-homochirality. In Thermosipho melanesiensis (strain DSM 12029 / CIP 104789 / BI429), this protein is D-aminoacyl-tRNA deacylase.